Consider the following 571-residue polypeptide: Leucine aminopeptidase A1, chloroplastic (571 aa).

A chloroplast-targeting transit peptide spans methionine 1–cysteine 53. 2 residues coordinate Mg(2+): lysine 342 and aspartate 347. Residue lysine 354 is part of the active site. The Mg(2+) site is built by aspartate 367, aspartate 427, and glutamate 429. The active site involves arginine 431.

This sequence belongs to the peptidase M17 family. As to quaternary structure, homohexamer (dimer of homotrimers). Mg(2+) serves as cofactor. As to expression, observed during floral development. Expressed in healthy and senescent leaves, cotyledons (emergence from seed coats), pistils, sepals, petals, stamens, and floral buds (at protein level). Present at very low levels in healthy leaves.

The protein localises to the plastid. The protein resides in the chloroplast. It carries out the reaction Release of an N-terminal amino acid, Xaa-|-Yaa-, in which Xaa is preferably Leu, but may be other amino acids including Pro although not Arg or Lys, and Yaa may be Pro. Amino acid amides and methyl esters are also readily hydrolyzed, but rates on arylamides are exceedingly low.. The catalysed reaction is Release of N-terminal proline from a peptide.. In terms of biological role, catalyzes the removal of unsubstituted N-terminal amino acids from various peptides. When associated as homohexamer, catalyzes the proteolyzes of Xaa-Leu dipeptides. Possesses leucine aminopeptidase activity against the model substrate leucine-amido methyl coumarin. Presumably involved in the processing and regular turnover of intracellular proteins. Regulates wound signaling and has a role in insect defense. Functions as a molecular chaperone to protect proteins from heat-induced damage. The chain is Leucine aminopeptidase A1, chloroplastic from Solanum lycopersicum (Tomato).